The chain runs to 723 residues: Catalase-peroxidase (723 aa).

The tryptophyl-tyrosyl-methioninium (Trp-Tyr) (with M-252) cross-link spans 98-226 (WHSAGSYRVG…LAAVMMGLIY (129 aa)). The Proton acceptor role is filled by histidine 99. The segment at residues 226–252 (YVNPEGVDGNPDPLKTAKDMRVTFARM) is a cross-link (tryptophyl-tyrosyl-methioninium (Tyr-Met) (with W-98)). A heme b-binding site is contributed by histidine 267.

Belongs to the peroxidase family. Peroxidase/catalase subfamily. As to quaternary structure, homodimer or homotetramer. Heme b is required as a cofactor. Post-translationally, formation of the three residue Trp-Tyr-Met cross-link is important for the catalase, but not the peroxidase activity of the enzyme.

The enzyme catalyses H2O2 + AH2 = A + 2 H2O. The catalysed reaction is 2 H2O2 = O2 + 2 H2O. Bifunctional enzyme with both catalase and broad-spectrum peroxidase activity. The sequence is that of Catalase-peroxidase from Vibrio vulnificus (strain CMCP6).